The following is a 651-amino-acid chain: Acetyl-coenzyme A synthetase (651 aa).

Residues 190–193 (RRGK) and Thr-311 each bind CoA. Residues 387–389 (GEP), 411–416 (DTWWQT), Asp-508, and Arg-523 contribute to the ATP site. A CoA-binding site is contributed by Ser-531. Arg-534 serves as a coordination point for ATP. Mg(2+) is bound by residues Val-545, His-547, and Val-550. Residue Lys-617 is modified to N6-acetyllysine.

The protein belongs to the ATP-dependent AMP-binding enzyme family. Mg(2+) is required as a cofactor. Acetylated. Deacetylation by the SIR2-homolog deacetylase activates the enzyme.

The enzyme catalyses acetate + ATP + CoA = acetyl-CoA + AMP + diphosphate. Catalyzes the conversion of acetate into acetyl-CoA (AcCoA), an essential intermediate at the junction of anabolic and catabolic pathways. AcsA undergoes a two-step reaction. In the first half reaction, AcsA combines acetate with ATP to form acetyl-adenylate (AcAMP) intermediate. In the second half reaction, it can then transfer the acetyl group from AcAMP to the sulfhydryl group of CoA, forming the product AcCoA. M.tuberculosis may use AcsA for both acetate and propionate assimilation. The chain is Acetyl-coenzyme A synthetase from Mycobacterium tuberculosis (strain CDC 1551 / Oshkosh).